Reading from the N-terminus, the 51-residue chain is Large ribosomal subunit protein eL39z/eL39x (51 aa).

The segment at 1–21 (MPSHKSFMIKKKLGKKMRQNR) is disordered. Over residues 7–19 (FMIKKKLGKKMRQ) the composition is skewed to basic residues.

Belongs to the eukaryotic ribosomal protein eL39 family.

In Arabidopsis thaliana (Mouse-ear cress), this protein is Large ribosomal subunit protein eL39z/eL39x (RPL39A).